The chain runs to 337 residues: Phenylalanine--tRNA ligase alpha subunit (337 aa).

Residue Glu252 coordinates Mg(2+).

It belongs to the class-II aminoacyl-tRNA synthetase family. Phe-tRNA synthetase alpha subunit type 1 subfamily. In terms of assembly, tetramer of two alpha and two beta subunits. Mg(2+) is required as a cofactor.

It is found in the cytoplasm. It carries out the reaction tRNA(Phe) + L-phenylalanine + ATP = L-phenylalanyl-tRNA(Phe) + AMP + diphosphate + H(+). The chain is Phenylalanine--tRNA ligase alpha subunit from Francisella philomiragia subsp. philomiragia (strain ATCC 25017 / CCUG 19701 / FSC 153 / O#319-036).